The primary structure comprises 108 residues: Transmembrane protein 141 (108 aa).

2 consecutive transmembrane segments (helical) span residues 32 to 52 (MKGV…QMFI) and 58 to 78 (YPLQ…SYGV).

It belongs to the TMEM141 family.

Its subcellular location is the membrane. This Homo sapiens (Human) protein is Transmembrane protein 141 (TMEM141).